The following is a 147-amino-acid chain: Response regulator Rcp1 (147 aa).

One can recognise a Response regulatory domain in the interval 10–135 (VILLVEDSKA…DLFKMVQGIE (126 aa)). Asp-68 is modified (4-aspartylphosphate).

Phosphorylated by Cph1.

In terms of biological role, forms a two-component system with Cph1 in which it acts as receiver substrate. In Synechocystis sp. (strain ATCC 27184 / PCC 6803 / Kazusa), this protein is Response regulator Rcp1 (rcp1).